The following is a 297-amino-acid chain: MRIILITGISGSGKSVALNALEDAGYYCVDNLPPRFLPELATYLAGDGKDRLAVAIDARSGASLDDMPQMIRDLSGQHDVRVLFLNASTQALIQRFSETRRRHPLSGSPAHDADVGLLTSLAEAIERERELVAGLAEFGHQIDTSNLRANVLRMWVKRFIEQEHTGLALMFESFGFKRGVPLDADFVFDVRTLPNPYYDRELRPLTGLDRPVIDFLEALPVVQQMMGDIESFLQKWLPGFRDDNRSYLTVAIGCTGGQHRSVFIAETLAARFASEGNVIVRHRDAPIDVDDSSKLVA.

Position 8 to 15 (Gly8 to Ser15) interacts with ATP. A GTP-binding site is contributed by Asp57–Ser60.

This sequence belongs to the RapZ-like family.

Functionally, displays ATPase and GTPase activities. The protein is Nucleotide-binding protein Bphy_0322 of Paraburkholderia phymatum (strain DSM 17167 / CIP 108236 / LMG 21445 / STM815) (Burkholderia phymatum).